An 873-amino-acid chain; its full sequence is Valine--tRNA ligase (873 aa).

Residues 46–56 (PNVTGKLHIGH) carry the 'HIGH' region motif. A 'KMSKS' region motif is present at residues 525 to 529 (KMSKS). ATP is bound at residue Lys-528. A coiled-coil region spans residues 804–873 (NDDFIDKEKM…ELIQDKLNKM (70 aa)).

Belongs to the class-I aminoacyl-tRNA synthetase family. ValS type 1 subfamily. As to quaternary structure, monomer.

Its subcellular location is the cytoplasm. The enzyme catalyses tRNA(Val) + L-valine + ATP = L-valyl-tRNA(Val) + AMP + diphosphate. Catalyzes the attachment of valine to tRNA(Val). As ValRS can inadvertently accommodate and process structurally similar amino acids such as threonine, to avoid such errors, it has a 'posttransfer' editing activity that hydrolyzes mischarged Thr-tRNA(Val) in a tRNA-dependent manner. The chain is Valine--tRNA ligase from Mesoplasma florum (strain ATCC 33453 / NBRC 100688 / NCTC 11704 / L1) (Acholeplasma florum).